A 40-amino-acid polypeptide reads, in one-letter code: Sarcotoxin-1D (40 aa).

This sequence belongs to the cecropin family.

Its subcellular location is the secreted. In terms of biological role, sarcotoxins, which are potent bactericidal proteins, are produced in response to injury. They are cytotoxic to both Gram-positive and Gram-negative bacteria. In Sarcophaga peregrina (Flesh fly), this protein is Sarcotoxin-1D.